We begin with the raw amino-acid sequence, 367 residues long: GTP cyclohydrolase FolE2 (367 aa).

Belongs to the GTP cyclohydrolase IV family.

The enzyme catalyses GTP + H2O = 7,8-dihydroneopterin 3'-triphosphate + formate + H(+). The protein operates within cofactor biosynthesis; 7,8-dihydroneopterin triphosphate biosynthesis; 7,8-dihydroneopterin triphosphate from GTP: step 1/1. Converts GTP to 7,8-dihydroneopterin triphosphate. This Dinoroseobacter shibae (strain DSM 16493 / NCIMB 14021 / DFL 12) protein is GTP cyclohydrolase FolE2.